The sequence spans 122 residues: Large ribosomal subunit protein uL14 (122 aa).

Belongs to the universal ribosomal protein uL14 family. Part of the 50S ribosomal subunit. Forms a cluster with proteins L3 and L19. In the 70S ribosome, L14 and L19 interact and together make contacts with the 16S rRNA in bridges B5 and B8.

Binds to 23S rRNA. Forms part of two intersubunit bridges in the 70S ribosome. This Bacillus anthracis (strain A0248) protein is Large ribosomal subunit protein uL14.